A 306-amino-acid polypeptide reads, in one-letter code: uncharacterized protein (306 aa).

The Cytoplasmic segment spans residues 1–6 (MRFRQL). Residues 7 to 27 (LPLFGALFALYIIWGSTYFVI) traverse the membrane as a helical segment. The EamA 1 domain maps to 18–141 (IIWGSTYFVI…GLAGIIMLNS (124 aa)). The Periplasmic portion of the chain corresponds to 28 to 36 (RIGVESWPP). Residues 37–57 (LMMAGVRFLAAGILLLAFLLL) traverse the membrane as a helical segment. The Cytoplasmic segment spans residues 58–67 (RGHKLPPLRP). Residues 68–88 (LLNAALIGLLLLAVGNGMVTV) traverse the membrane as a helical segment. At 89–93 (AEHQN) the chain is on the periplasmic side. The helical transmembrane segment at 94–114 (VPSGIAAVVVATVPLFTLCFS) threads the bilayer. The Cytoplasmic portion of the chain corresponds to 115 to 125 (RLFGIKTRKLE). Residues 126–146 (WVGIAIGLAGIIMLNSGGNLS) form a helical membrane-spanning segment. At 147–148 (GN) the chain is on the periplasmic side. A helical transmembrane segment spans residues 149–169 (PWGAILILIGSISWAFGSVYG). The region spanning 160-285 (ISWAFGSVYG…IVFAVVLVTL (126 aa)) is the EamA 2 domain. The Cytoplasmic portion of the chain corresponds to 170-173 (SRIT). A helical transmembrane segment spans residues 174 to 194 (LPVGMMAGAIEMLAAGVVLMI). Residues 195–206 (ASMIAGEKLTAL) lie on the Periplasmic side of the membrane. The helical transmembrane segment at 207 to 227 (PSLSGFLAVGYLALFGSIIAI) threads the bilayer. Over 228–239 (NAYMYLIRNVSP) the chain is Cytoplasmic. The helical transmembrane segment at 240–260 (ALATSYAYVNPVVAVLLGTGL) threads the bilayer. The Periplasmic segment spans residues 261–269 (GGETLSKIE). The helical transmembrane segment at 270 to 290 (WLALGVIVFAVVLVTLGKYLF) threads the bilayer. Topologically, residues 291-306 (PAKPVVAPVIQDASSE) are cytoplasmic.

The protein belongs to the EamA transporter family.

It is found in the cell inner membrane. This is an uncharacterized protein from Escherichia coli O157:H7.